The chain runs to 482 residues: GTPase Obg (482 aa).

The Obg domain occupies 2-159; the sequence is PRFIDRVVVH…RELTLELKTV (158 aa). The OBG-type G domain occupies 160 to 341; the sequence is ADVGLVGFPS…LIFALWDMVA (182 aa). Residues 166 to 173, 191 to 195, 212 to 215, 292 to 295, and 322 to 324 each bind GTP; these read GFPSAGKS, FTTLA, DVPG, NKID, and STV. Residues Ser173 and Thr193 each contribute to the Mg(2+) site. An OCT domain is found at 359-437; sequence PIPVDETAFS…IGDMTFDWEP (79 aa). Positions 450-482 are disordered; sequence RGTDVRLEQTDRVGADERKAARKARRQSDDGEE. The segment covering 452-468 has biased composition (basic and acidic residues); that stretch reads TDVRLEQTDRVGADERK.

This sequence belongs to the TRAFAC class OBG-HflX-like GTPase superfamily. OBG GTPase family. Monomer. It depends on Mg(2+) as a cofactor.

The protein resides in the cytoplasm. In terms of biological role, an essential GTPase which binds GTP, GDP and possibly (p)ppGpp with moderate affinity, with high nucleotide exchange rates and a fairly low GTP hydrolysis rate. Plays a role in control of the cell cycle, stress response, ribosome biogenesis and in those bacteria that undergo differentiation, in morphogenesis control. The polypeptide is GTPase Obg (Mycolicibacterium gilvum (strain PYR-GCK) (Mycobacterium gilvum (strain PYR-GCK))).